A 72-amino-acid chain; its full sequence is Translation initiation factor IF-1 (72 aa).

One can recognise an S1-like domain in the interval 1–72 (MTKEEVLEFP…TKGRITYRFK (72 aa)).

It belongs to the IF-1 family. In terms of assembly, component of the 30S ribosomal translation pre-initiation complex which assembles on the 30S ribosome in the order IF-2 and IF-3, IF-1 and N-formylmethionyl-tRNA(fMet); mRNA recruitment can occur at any time during PIC assembly.

The protein localises to the cytoplasm. Its function is as follows. One of the essential components for the initiation of protein synthesis. Stabilizes the binding of IF-2 and IF-3 on the 30S subunit to which N-formylmethionyl-tRNA(fMet) subsequently binds. Helps modulate mRNA selection, yielding the 30S pre-initiation complex (PIC). Upon addition of the 50S ribosomal subunit IF-1, IF-2 and IF-3 are released leaving the mature 70S translation initiation complex. This Agrobacterium fabrum (strain C58 / ATCC 33970) (Agrobacterium tumefaciens (strain C58)) protein is Translation initiation factor IF-1.